A 201-amino-acid polypeptide reads, in one-letter code: Large ribosomal subunit protein uL4 (201 aa).

Residues 45 to 66 (AQLTRSEVSGGGKKPWRQKGTG) are disordered.

This sequence belongs to the universal ribosomal protein uL4 family. In terms of assembly, part of the 50S ribosomal subunit.

In terms of biological role, one of the primary rRNA binding proteins, this protein initially binds near the 5'-end of the 23S rRNA. It is important during the early stages of 50S assembly. It makes multiple contacts with different domains of the 23S rRNA in the assembled 50S subunit and ribosome. Forms part of the polypeptide exit tunnel. The chain is Large ribosomal subunit protein uL4 from Aeromonas salmonicida (strain A449).